The sequence spans 226 residues: 3-dehydroquinate dehydratase (226 aa).

3-dehydroquinate-binding positions include 29–31 and arginine 56; that span reads EFR. Histidine 120 acts as the Proton donor/acceptor in catalysis. Lysine 146 functions as the Schiff-base intermediate with substrate in the catalytic mechanism. 3-dehydroquinate is bound by residues arginine 187, threonine 208, and glutamine 212.

This sequence belongs to the type-I 3-dehydroquinase family. In terms of assembly, homodimer.

It carries out the reaction 3-dehydroquinate = 3-dehydroshikimate + H2O. It participates in metabolic intermediate biosynthesis; chorismate biosynthesis; chorismate from D-erythrose 4-phosphate and phosphoenolpyruvate: step 3/7. Its function is as follows. Involved in the third step of the chorismate pathway, which leads to the biosynthesis of aromatic amino acids. Catalyzes the cis-dehydration of 3-dehydroquinate (DHQ) and introduces the first double bond of the aromatic ring to yield 3-dehydroshikimate. The chain is 3-dehydroquinate dehydratase from Halobacterium salinarum (strain ATCC 700922 / JCM 11081 / NRC-1) (Halobacterium halobium).